We begin with the raw amino-acid sequence, 318 residues long: Transaldolase (318 aa).

The active-site Schiff-base intermediate with substrate is Lys132.

The protein belongs to the transaldolase family. Type 1 subfamily. As to quaternary structure, homodimer.

It is found in the cytoplasm. It catalyses the reaction D-sedoheptulose 7-phosphate + D-glyceraldehyde 3-phosphate = D-erythrose 4-phosphate + beta-D-fructose 6-phosphate. Its pathway is carbohydrate degradation; pentose phosphate pathway; D-glyceraldehyde 3-phosphate and beta-D-fructose 6-phosphate from D-ribose 5-phosphate and D-xylulose 5-phosphate (non-oxidative stage): step 2/3. Its function is as follows. Transaldolase is important for the balance of metabolites in the pentose-phosphate pathway. This is Transaldolase from Allorhizobium ampelinum (strain ATCC BAA-846 / DSM 112012 / S4) (Agrobacterium vitis (strain S4)).